The following is a 183-amino-acid chain: Probable chemoreceptor glutamine deamidase CheD (183 aa).

Belongs to the CheD family.

The catalysed reaction is L-glutaminyl-[protein] + H2O = L-glutamyl-[protein] + NH4(+). Probably deamidates glutamine residues to glutamate on methyl-accepting chemotaxis receptors (MCPs), playing an important role in chemotaxis. The sequence is that of Probable chemoreceptor glutamine deamidase CheD from Rhizobium meliloti (strain 1021) (Ensifer meliloti).